Here is a 360-residue protein sequence, read N- to C-terminus: UDP-N-acetylglucosamine--N-acetylmuramyl-(pentapeptide) pyrophosphoryl-undecaprenol N-acetylglucosamine transferase (360 aa).

UDP-N-acetyl-alpha-D-glucosamine is bound by residues Ser-198 and Gln-289.

This sequence belongs to the glycosyltransferase 28 family. MurG subfamily.

Its subcellular location is the cell membrane. It catalyses the reaction Mur2Ac(oyl-L-Ala-gamma-D-Glu-L-Lys-D-Ala-D-Ala)-di-trans,octa-cis-undecaprenyl diphosphate + UDP-N-acetyl-alpha-D-glucosamine = beta-D-GlcNAc-(1-&gt;4)-Mur2Ac(oyl-L-Ala-gamma-D-Glu-L-Lys-D-Ala-D-Ala)-di-trans,octa-cis-undecaprenyl diphosphate + UDP + H(+). Its pathway is cell wall biogenesis; peptidoglycan biosynthesis. In terms of biological role, cell wall formation. Catalyzes the transfer of a GlcNAc subunit on undecaprenyl-pyrophosphoryl-MurNAc-pentapeptide (lipid intermediate I) to form undecaprenyl-pyrophosphoryl-MurNAc-(pentapeptide)GlcNAc (lipid intermediate II). The sequence is that of UDP-N-acetylglucosamine--N-acetylmuramyl-(pentapeptide) pyrophosphoryl-undecaprenol N-acetylglucosamine transferase from Streptococcus pyogenes serotype M5 (strain Manfredo).